The chain runs to 435 residues: Trigger factor (435 aa).

The interval methionine 125–arginine 147 is disordered. Residues glycine 164–proline 249 enclose the PPIase FKBP-type domain.

The protein belongs to the FKBP-type PPIase family. Tig subfamily.

Its subcellular location is the cytoplasm. The enzyme catalyses [protein]-peptidylproline (omega=180) = [protein]-peptidylproline (omega=0). In terms of biological role, involved in protein export. Acts as a chaperone by maintaining the newly synthesized protein in an open conformation. Functions as a peptidyl-prolyl cis-trans isomerase. The polypeptide is Trigger factor (Limosilactobacillus fermentum (strain NBRC 3956 / LMG 18251) (Lactobacillus fermentum)).